A 79-amino-acid chain; its full sequence is Dolichyl-diphosphooligosaccharide--protein glycosyltransferase subunit TMEM258 (79 aa).

An N-acetylmethionine modification is found at Met1. Transmembrane regions (helical) follow at residues 17-37 (VFPH…AWFF) and 59-79 (VASL…GIYI).

It belongs to the OST5 family. Component of the oligosaccharyltransferase (OST) complex. OST exists in two different complex forms which contain common core subunits RPN1, RPN2, OST48, OST4, DAD1 and TMEM258, either STT3A or STT3B as catalytic subunits, and form-specific accessory subunits. STT3A complex assembly occurs through the formation of 3 subcomplexes. Subcomplex 1 contains RPN1 and TMEM258, subcomplex 2 contains the STT3A-specific subunits STT3A, DC2/OSTC, and KCP2 as well as the core subunit OST4, and subcomplex 3 contains RPN2, DAD1, and OST48. The STT3A complex can form stable complexes with the Sec61 complex or with both the Sec61 and TRAP complexes.

It is found in the membrane. It localises to the endoplasmic reticulum. Its subcellular location is the cytoplasm. It functions in the pathway protein modification; protein glycosylation. Its function is as follows. Subunit of the oligosaccharyl transferase (OST) complex that catalyzes the initial transfer of a defined glycan (Glc(3)Man(9)GlcNAc(2) in eukaryotes) from the lipid carrier dolichol-pyrophosphate to an asparagine residue within an Asn-X-Ser/Thr consensus motif in nascent polypeptide chains, the first step in protein N-glycosylation. N-glycosylation occurs cotranslationally and the complex associates with the Sec61 complex at the channel-forming translocon complex that mediates protein translocation across the endoplasmic reticulum (ER). All subunits are required for a maximal enzyme activity. Involved in ER homeostasis in the colonic epithelium. This chain is Dolichyl-diphosphooligosaccharide--protein glycosyltransferase subunit TMEM258, found in Bos taurus (Bovine).